Consider the following 102-residue polypeptide: Large ribosomal subunit protein bL21 (102 aa).

It belongs to the bacterial ribosomal protein bL21 family. Part of the 50S ribosomal subunit. Contacts protein L20.

This protein binds to 23S rRNA in the presence of protein L20. The protein is Large ribosomal subunit protein bL21 of Marinomonas sp. (strain MWYL1).